A 232-amino-acid polypeptide reads, in one-letter code: Large ribosomal subunit protein uL1 (232 aa).

This sequence belongs to the universal ribosomal protein uL1 family. As to quaternary structure, part of the 50S ribosomal subunit.

Binds directly to 23S rRNA. The L1 stalk is quite mobile in the ribosome, and is involved in E site tRNA release. Functionally, protein L1 is also a translational repressor protein, it controls the translation of the L11 operon by binding to its mRNA. The polypeptide is Large ribosomal subunit protein uL1 (Bordetella bronchiseptica (strain ATCC BAA-588 / NCTC 13252 / RB50) (Alcaligenes bronchisepticus)).